Consider the following 381-residue polypeptide: Alkanesulfonate monooxygenase (381 aa).

This sequence belongs to the SsuD family. Homotetramer.

The enzyme catalyses an alkanesulfonate + FMNH2 + O2 = an aldehyde + FMN + sulfite + H2O + 2 H(+). Catalyzes the desulfonation of aliphatic sulfonates. The polypeptide is Alkanesulfonate monooxygenase (Escherichia coli (strain SE11)).